Here is a 205-residue protein sequence, read N- to C-terminus: Recombination protein RecR (205 aa).

The C4-type zinc-finger motif lies at 60 to 75 (CKVCHNISDTETCQIC). Positions 83–178 (SMVCVVENIR…KLSVLARGVS (96 aa)) constitute a Toprim domain.

The protein belongs to the RecR family.

Its function is as follows. May play a role in DNA repair. It seems to be involved in an RecBC-independent recombinational process of DNA repair. It may act with RecF and RecO. This is Recombination protein RecR from Bacteroides fragilis (strain ATCC 25285 / DSM 2151 / CCUG 4856 / JCM 11019 / LMG 10263 / NCTC 9343 / Onslow / VPI 2553 / EN-2).